The sequence spans 1105 residues: DNA polymerase delta catalytic subunit (1105 aa).

Residues 1 to 46 (MSSGGRGGKRRGAPPPGPSGAAAKRAHPGGTPQPPPPAATAAAPVA) form a disordered region. Residues cysteine 1015, cysteine 1018, cysteine 1030, and cysteine 1033 each coordinate Zn(2+). Residues 1015–1033 (CLGCKAVISGSNQTLCFHC) form a CysA-type zinc finger. [4Fe-4S] cluster is bound by residues cysteine 1062, cysteine 1065, cysteine 1075, and cysteine 1080. Residues 1062–1080 (CQECQGSLHQDVLCTSRDC) carry the CysB motif motif.

The protein belongs to the DNA polymerase type-B family. As to quaternary structure, heterodimer with subunits of 125 kDa and 50 kDa. The 125 kDa subunit contains the polymerase active site and most likely the active site for the 3'-5' exonuclease activity. Requires [4Fe-4S] cluster as cofactor.

It is found in the nucleus. It carries out the reaction DNA(n) + a 2'-deoxyribonucleoside 5'-triphosphate = DNA(n+1) + diphosphate. This polymerase possesses two enzymatic activities: DNA synthesis (polymerase) and an exonucleolytic activity that degrades single-stranded DNA in the 3'- to 5'-direction. This Oryza sativa subsp. japonica (Rice) protein is DNA polymerase delta catalytic subunit (POLD1).